The primary structure comprises 214 residues: Large ribosomal subunit protein uL3 (214 aa).

The tract at residues 131 to 155 (GAQRTSHGNSRSHRVPGSIGMAQDP) is disordered. Glutamine 153 bears the N5-methylglutamine mark.

This sequence belongs to the universal ribosomal protein uL3 family. Part of the 50S ribosomal subunit. Forms a cluster with proteins L14 and L19. Methylated by PrmB.

In terms of biological role, one of the primary rRNA binding proteins, it binds directly near the 3'-end of the 23S rRNA, where it nucleates assembly of the 50S subunit. The sequence is that of Large ribosomal subunit protein uL3 from Neisseria gonorrhoeae (strain ATCC 700825 / FA 1090).